The primary structure comprises 357 residues: UDP-N-acetylglucosamine--N-acetylmuramyl-(pentapeptide) pyrophosphoryl-undecaprenol N-acetylglucosamine transferase (357 aa).

UDP-N-acetyl-alpha-D-glucosamine is bound by residues 7–9, Asn-119, Arg-159, Ser-187, Ile-241, and Gln-286; that span reads TGG.

The protein belongs to the glycosyltransferase 28 family. MurG subfamily.

The protein resides in the cell inner membrane. It catalyses the reaction di-trans,octa-cis-undecaprenyl diphospho-N-acetyl-alpha-D-muramoyl-L-alanyl-D-glutamyl-meso-2,6-diaminopimeloyl-D-alanyl-D-alanine + UDP-N-acetyl-alpha-D-glucosamine = di-trans,octa-cis-undecaprenyl diphospho-[N-acetyl-alpha-D-glucosaminyl-(1-&gt;4)]-N-acetyl-alpha-D-muramoyl-L-alanyl-D-glutamyl-meso-2,6-diaminopimeloyl-D-alanyl-D-alanine + UDP + H(+). It participates in cell wall biogenesis; peptidoglycan biosynthesis. Its function is as follows. Cell wall formation. Catalyzes the transfer of a GlcNAc subunit on undecaprenyl-pyrophosphoryl-MurNAc-pentapeptide (lipid intermediate I) to form undecaprenyl-pyrophosphoryl-MurNAc-(pentapeptide)GlcNAc (lipid intermediate II). The chain is UDP-N-acetylglucosamine--N-acetylmuramyl-(pentapeptide) pyrophosphoryl-undecaprenol N-acetylglucosamine transferase from Nitrosomonas europaea (strain ATCC 19718 / CIP 103999 / KCTC 2705 / NBRC 14298).